The chain runs to 444 residues: Acyl-CoA 6-desaturase (444 aa).

Residues 1 to 131 (MGKGGNQGEG…DMNLFKTNHV (131 aa)) are Cytoplasmic-facing. The region spanning 18-95 (VPTFSWEEIQ…LKPLLIGELA (78 aa)) is the Cytochrome b5 heme-binding domain. A helical membrane pass occupies residues 132–152 (FFLLLLAHIIALESIAWFTVF). Residues 153 to 157 (YFGNG) are Lumenal-facing. A helical transmembrane segment spans residues 158–178 (WISTLITAFVLATSQAQAGWL). Residues 179–264 (QHDYGHLSVY…KYLPYNHQHE (86 aa)) lie on the Cytoplasmic side of the membrane. Positions 180–184 (HDYGH) match the Histidine box-1 motif. A Histidine box-2 motif is present at residues 217–221 (HFQHH). Residues 265-285 (YFFLIGPPLLIPMYFQYQIIM) traverse the membrane as a helical segment. Residues 286–305 (TMIVHKNWVDLAWAISYYIR) are Lumenal-facing. The helical transmembrane segment at 306–326 (FFITYIPFYGILGALLFLNFI) threads the bilayer. At 327–444 (RFLESHWFVW…KLWLDAYLHK (118 aa)) the chain is on the cytoplasmic side. The Histidine box-3 signature appears at 382 to 386 (QIEHH).

The protein belongs to the fatty acid desaturase type 1 family.

Its subcellular location is the endoplasmic reticulum membrane. It catalyses the reaction (9Z,12Z)-octadecadienoyl-CoA + 2 Fe(II)-[cytochrome b5] + O2 + 2 H(+) = (6Z,9Z,12Z)-octadecatrienoyl-CoA + 2 Fe(III)-[cytochrome b5] + 2 H2O. It carries out the reaction (9Z,12Z,15Z)-octadecatrienoyl-CoA + 2 Fe(II)-[cytochrome b5] + O2 + 2 H(+) = (6Z,9Z,12Z,15Z)-octadecatetraenoyl-CoA + 2 Fe(III)-[cytochrome b5] + 2 H2O. The catalysed reaction is (9Z,12Z,15Z,18Z,21Z)-tetracosapentaenoyl-CoA + 2 Fe(II)-[cytochrome b5] + O2 + 2 H(+) = (6Z,9Z,12Z,15Z,18Z,21Z)-tetracosahexaenoyl-CoA + 2 Fe(III)-[cytochrome b5] + 2 H2O. The enzyme catalyses (11E)-octadecenoyl-CoA + 2 Fe(II)-[cytochrome b5] + O2 + 2 H(+) = (6Z,11E)-octadecadienoyl-CoA + 2 Fe(III)-[cytochrome b5] + 2 H2O. It catalyses the reaction (11Z,14Z)-eicosadienoyl-CoA + 2 Fe(II)-[cytochrome b5] + O2 + 2 H(+) = (8Z,11Z,14Z)-eicosatrienoyl-CoA + 2 Fe(III)-[cytochrome b5] + 2 H2O. It carries out the reaction (11Z,14Z,17Z)-eicosatrienoyl-CoA + 2 Fe(II)-[cytochrome b5] + O2 + 2 H(+) = (8Z,11Z,14Z,17Z)-eicosatetraenoyl-CoA + 2 Fe(III)-[cytochrome b5] + 2 H2O. Its pathway is lipid metabolism; polyunsaturated fatty acid biosynthesis. In terms of biological role, involved in the biosynthesis of highly unsaturated fatty acids (HUFA) from the essential polyunsaturated fatty acids (PUFA) linoleic acid (LA) (18:2n-6) and alpha-linolenic acid (ALA) (18:3n-3) precursors, acting as a fatty acyl-coenzyme A (CoA) desaturase that introduces a cis double bond at carbon 6 of the fatty acyl chain. Catalyzes the first and rate limiting step in this pathway which is the desaturation of LA (18:2n-6) and ALA (18:3n-3) into gamma-linoleate (GLA) (18:3n-6) and stearidonate (18:4n-3), respectively. Subsequently, in the biosynthetic pathway of HUFA n-3 series, it desaturates tetracosapentaenoate (24:5n-3) to tetracosahexaenoate (24:6n-3), which is then converted to docosahexaenoate (DHA)(22:6n-3), an important lipid for nervous system function. It can also desaturate (11E)-octadecenoate (trans-vaccenoate) at carbon 6 generating (6Z,11E)-octadecadienoate. In addition to Delta-6 activity, this enzyme exhibits Delta-8 activity with slight biases toward n-3 fatty acyl-CoA substrates. The sequence is that of Acyl-CoA 6-desaturase (FADS2) from Pongo abelii (Sumatran orangutan).